A 226-amino-acid polypeptide reads, in one-letter code: ATP synthase F(0) complex subunit a (226 aa).

6 helical membrane-spanning segments follow: residues 12 to 32, 68 to 88, 97 to 117, 135 to 155, 164 to 184, and 189 to 209; these read PTMM…ILFP, WTLM…LGLL, QLSM…FMGF, IFLI…QPMA, ITAG…LMDI, and ALIT…VAMI.

Belongs to the ATPase A chain family. As to quaternary structure, component of the ATP synthase complex composed at least of ATP5F1A/subunit alpha, ATP5F1B/subunit beta, ATP5MC1/subunit c (homooctomer), MT-ATP6/subunit a, MT-ATP8/subunit 8, ATP5ME/subunit e, ATP5MF/subunit f, ATP5MG/subunit g, ATP5MK/subunit k, ATP5MJ/subunit j, ATP5F1C/subunit gamma, ATP5F1D/subunit delta, ATP5F1E/subunit epsilon, ATP5PF/subunit F6, ATP5PB/subunit b, ATP5PD/subunit d, ATP5PO/subunit OSCP. ATP synthase complex consists of a soluble F(1) head domain (subunits alpha(3) and beta(3)) - the catalytic core - and a membrane F(0) domain - the membrane proton channel (subunits c, a, 8, e, f, g, k and j). These two domains are linked by a central stalk (subunits gamma, delta, and epsilon) rotating inside the F1 region and a stationary peripheral stalk (subunits F6, b, d, and OSCP). Interacts with DNAJC30; interaction is direct.

The protein localises to the mitochondrion inner membrane. It carries out the reaction H(+)(in) = H(+)(out). Its function is as follows. Subunit a, of the mitochondrial membrane ATP synthase complex (F(1)F(0) ATP synthase or Complex V) that produces ATP from ADP in the presence of a proton gradient across the membrane which is generated by electron transport complexes of the respiratory chain. ATP synthase complex consist of a soluble F(1) head domain - the catalytic core - and a membrane F(1) domain - the membrane proton channel. These two domains are linked by a central stalk rotating inside the F(1) region and a stationary peripheral stalk. During catalysis, ATP synthesis in the catalytic domain of F(1) is coupled via a rotary mechanism of the central stalk subunits to proton translocation. With the subunit c (ATP5MC1), forms the proton-conducting channel in the F(0) domain, that contains two crucial half-channels (inlet and outlet) that facilitate proton movement from the mitochondrial intermembrane space (IMS) into the matrix. Protons are taken up via the inlet half-channel and released through the outlet half-channel, following a Grotthuss mechanism. This is ATP synthase F(0) complex subunit a from Equus asinus (Donkey).